Consider the following 482-residue polypeptide: Glycogen synthase (482 aa).

Position 21 (Lys-21) interacts with ADP-alpha-D-glucose.

The protein belongs to the glycosyltransferase 1 family. Bacterial/plant glycogen synthase subfamily.

It carries out the reaction [(1-&gt;4)-alpha-D-glucosyl](n) + ADP-alpha-D-glucose = [(1-&gt;4)-alpha-D-glucosyl](n+1) + ADP + H(+). Its pathway is glycan biosynthesis; glycogen biosynthesis. Functionally, synthesizes alpha-1,4-glucan chains using ADP-glucose. This Clostridium perfringens (strain 13 / Type A) protein is Glycogen synthase.